The primary structure comprises 856 residues: MTVKGLETHTPMMQQFLRIKAENPDTLLFYRMGDFYELFFDDAKRASQLLDITLTKRGSSNGQPIPMAGLPYHAVEGYLAKLVQQGVSVAICEQIGDPATSKGPVDRQVVRIVTPGTVSDEALLSERRDNLVAAIYQNSKGFGYATLDITSGRFMLSEPETEEAMQAELQRTSPAELLYPEDFTQMHIIEAIKGTRRRPVWEFDLDTARQQLTMQFGTRDLIGFGVEKTERGLSAAGCLLQYVKDTQRTALPHIRAITLDSKDHSVILDAATRRNLELTQNLSGGFDNTLASVLDHTATPMGSRLLKRWLHQPIRDTKQLNHRLDAIAAFKDTGMFIEVAEVLHHMGDLERILARLALRSARPRDLARMRSALQSLPQLADLLADIEQPRIGELAKYSAPMDELCELLERAIIENPPVIIRDGGVLAPGYNAELDEWRDLADGAKKFLDDLETREREQHGIDSLKVGFNQVHGFFIQISRGQSHLAPDHYVRRQTLKNAERYIIPELKEHEDKVLSSKSKALGLEKKLWEELFDQLLPHLERLQNAASALSELDVLANLAERADTLNYCRPELTDQTGIEIAAGRHPVVEQVLSEPFIANPTSLHHDRRMLIITGPNMGGKSTYMRQTALIALMAHVGSFVPAEAVKIGSLDRIFTRIGASDDLASGRSTFMVEMTETANILHNATSKSLVLMDEIGRGTSTYDGLSLAWASAEWLAEKISAMTLFATHYFELTELPSMMDGLANVHLDAVEHGDEIAFMHAVQEGAASKSYGLAVASLAGVPKAVIKRAKAKLTQLETTGHQQAIKNPSKAPREEQQLTLLPEPSDVEEALAKVNPDEMTPRQALDELYRLKALM.

615 to 622 contributes to the ATP binding site; the sequence is GPNMGGKS. Polar residues predominate over residues 798–807; the sequence is ETTGHQQAIK. A disordered region spans residues 798-817; it reads ETTGHQQAIKNPSKAPREEQ.

This sequence belongs to the DNA mismatch repair MutS family.

Functionally, this protein is involved in the repair of mismatches in DNA. It is possible that it carries out the mismatch recognition step. This protein has a weak ATPase activity. The chain is DNA mismatch repair protein MutS from Photobacterium profundum (strain SS9).